Here is a 123-residue protein sequence, read N- to C-terminus: Large ribosomal subunit protein bL12 (123 aa).

This sequence belongs to the bacterial ribosomal protein bL12 family. In terms of assembly, homodimer. Part of the ribosomal stalk of the 50S ribosomal subunit. Forms a multimeric L10(L12)X complex, where L10 forms an elongated spine to which 2 to 4 L12 dimers bind in a sequential fashion. Binds GTP-bound translation factors.

Functionally, forms part of the ribosomal stalk which helps the ribosome interact with GTP-bound translation factors. Is thus essential for accurate translation. The polypeptide is Large ribosomal subunit protein bL12 (Borrelia duttonii (strain Ly)).